Here is a 705-residue protein sequence, read N- to C-terminus: Polyribonucleotide nucleotidyltransferase (705 aa).

The Mg(2+) site is built by D494 and D500. In terms of domain architecture, KH spans 561-620 (PRITTVKVKPEKVRAVIGTGGKNIRQIVSETGVTIDVEDDGTVTIASSDMEASARAIAMV). One can recognise an S1 motif domain in the interval 630-698 (GKIYRGTVKK…KQGKIRLSRK (69 aa)).

The protein belongs to the polyribonucleotide nucleotidyltransferase family. It depends on Mg(2+) as a cofactor.

The protein localises to the cytoplasm. The enzyme catalyses RNA(n+1) + phosphate = RNA(n) + a ribonucleoside 5'-diphosphate. Its function is as follows. Involved in mRNA degradation. Catalyzes the phosphorolysis of single-stranded polyribonucleotides processively in the 3'- to 5'-direction. The sequence is that of Polyribonucleotide nucleotidyltransferase from Syntrophus aciditrophicus (strain SB).